The following is a 191-amino-acid chain: Ribosome maturation factor RimM (191 aa).

The region spanning 102–185 is the PRC barrel domain; the sequence is EEEYHVSQLI…RIEINPPKGL (84 aa).

Belongs to the RimM family. Binds ribosomal protein uS19.

It localises to the cytoplasm. In terms of biological role, an accessory protein needed during the final step in the assembly of 30S ribosomal subunit, possibly for assembly of the head region. Essential for efficient processing of 16S rRNA. May be needed both before and after RbfA during the maturation of 16S rRNA. It has affinity for free ribosomal 30S subunits but not for 70S ribosomes. The chain is Ribosome maturation factor RimM from Crocosphaera subtropica (strain ATCC 51142 / BH68) (Cyanothece sp. (strain ATCC 51142)).